We begin with the raw amino-acid sequence, 142 residues long: Large ribosomal subunit protein uL11 (142 aa).

Belongs to the universal ribosomal protein uL11 family. In terms of assembly, part of the ribosomal stalk of the 50S ribosomal subunit. Interacts with L10 and the large rRNA to form the base of the stalk. L10 forms an elongated spine to which L12 dimers bind in a sequential fashion forming a multimeric L10(L12)X complex. One or more lysine residues are methylated.

In terms of biological role, forms part of the ribosomal stalk which helps the ribosome interact with GTP-bound translation factors. This chain is Large ribosomal subunit protein uL11, found in Bradyrhizobium sp. (strain BTAi1 / ATCC BAA-1182).